Reading from the N-terminus, the 198-residue chain is dCTP deaminase, dUMP-forming (198 aa).

DCTP is bound by residues 115 to 120 (KSSIAR), Asp133, 141 to 143 (TLE), Gln162, Tyr175, and Lys184. Glu143 serves as the catalytic Proton donor/acceptor.

The protein belongs to the dCTP deaminase family. As to quaternary structure, homotrimer.

It catalyses the reaction dCTP + 2 H2O = dUMP + NH4(+) + diphosphate. Its pathway is pyrimidine metabolism; dUMP biosynthesis; dUMP from dCTP: step 1/1. Bifunctional enzyme that catalyzes both the deamination of dCTP to dUTP and the hydrolysis of dUTP to dUMP without releasing the toxic dUTP intermediate. This chain is dCTP deaminase, dUMP-forming, found in Nanoarchaeum equitans (strain Kin4-M).